The primary structure comprises 140 residues: Nucleoside diphosphate kinase (140 aa).

ATP contacts are provided by K11, F59, R87, T93, R104, and N114. H117 functions as the Pros-phosphohistidine intermediate in the catalytic mechanism.

Belongs to the NDK family. In terms of assembly, homotetramer. Mg(2+) serves as cofactor.

The protein resides in the cytoplasm. It carries out the reaction a 2'-deoxyribonucleoside 5'-diphosphate + ATP = a 2'-deoxyribonucleoside 5'-triphosphate + ADP. The enzyme catalyses a ribonucleoside 5'-diphosphate + ATP = a ribonucleoside 5'-triphosphate + ADP. Its function is as follows. Major role in the synthesis of nucleoside triphosphates other than ATP. The ATP gamma phosphate is transferred to the NDP beta phosphate via a ping-pong mechanism, using a phosphorylated active-site intermediate. The protein is Nucleoside diphosphate kinase of Rhizobium etli (strain ATCC 51251 / DSM 11541 / JCM 21823 / NBRC 15573 / CFN 42).